The following is a 135-amino-acid chain: ATP synthase epsilon chain (135 aa).

Belongs to the ATPase epsilon chain family. F-type ATPases have 2 components, CF(1) - the catalytic core - and CF(0) - the membrane proton channel. CF(1) has five subunits: alpha(3), beta(3), gamma(1), delta(1), epsilon(1). CF(0) has three main subunits: a, b and c.

The protein localises to the cell inner membrane. Its function is as follows. Produces ATP from ADP in the presence of a proton gradient across the membrane. This chain is ATP synthase epsilon chain, found in Rhizobium johnstonii (strain DSM 114642 / LMG 32736 / 3841) (Rhizobium leguminosarum bv. viciae).